A 274-amino-acid polypeptide reads, in one-letter code: Large ribosomal subunit protein uL2 (274 aa).

Residues 224–256 are disordered; that stretch reads VMNPVDHPHGGGEGKTGEGRHPVDPWGNLTKGY. Over residues 229 to 246 the composition is skewed to basic and acidic residues; sequence DHPHGGGEGKTGEGRHPV.

This sequence belongs to the universal ribosomal protein uL2 family. In terms of assembly, part of the 50S ribosomal subunit. Forms a bridge to the 30S subunit in the 70S ribosome.

One of the primary rRNA binding proteins. Required for association of the 30S and 50S subunits to form the 70S ribosome, for tRNA binding and peptide bond formation. It has been suggested to have peptidyltransferase activity; this is somewhat controversial. Makes several contacts with the 16S rRNA in the 70S ribosome. In Polaromonas sp. (strain JS666 / ATCC BAA-500), this protein is Large ribosomal subunit protein uL2.